We begin with the raw amino-acid sequence, 746 residues long: Exostosin-1 (746 aa).

Residues 1–7 (MQAKKRY) are Cytoplasmic-facing. The chain crosses the membrane as a helical; Signal-anchor for type II membrane protein span at residues 8 to 28 (FILLSAGSCLALLFYFGGLQF). Residues 29–746 (RASRSHSRRE…RKKYRDIERL (718 aa)) are Lumenal-facing. A glycan (N-linked (GlcNAc...) asparagine) is linked at asparagine 89. Intrachain disulfides connect cysteine 98-cysteine 103 and cysteine 109-cysteine 152. The a protein site is built by leucine 166 and tyrosine 203. UDP is bound by residues lysine 267, lysine 269, tyrosine 271, and arginine 280. Residues cysteine 298 and cysteine 312 are joined by a disulfide bond. Residue histidine 300 participates in a protein binding. The UDP site is built by tyrosine 319 and tyrosine 324. A glycan (N-linked (GlcNAc...) asparagine) is linked at asparagine 330. Cystine bridges form between cysteine 334–cysteine 355 and cysteine 652–cysteine 704. UDP contacts are provided by arginine 346 and glutamate 349.

The protein belongs to the glycosyltransferase 47 family. As to quaternary structure, part of the heparan sulfate polymerase, a dimeric complex composed of EXT1 and EXT2. Could also form homooligomeric complexes. Interacts with NDST1. N-glycosylated.

The protein localises to the golgi apparatus membrane. Its subcellular location is the golgi apparatus. It localises to the cis-Golgi network membrane. It is found in the endoplasmic reticulum membrane. It catalyses the reaction 3-O-{alpha-D-GlcNAc-[(1-&gt;4)-beta-D-GlcA-(1-&gt;4)-alpha-D-GlcNAc](n)-(1-&gt;4)-beta-D-GlcA-(1-&gt;3)-beta-D-Gal-(1-&gt;3)-beta-D-Gal-(1-&gt;4)-beta-D-Xyl}-L-seryl-[protein] + UDP-alpha-D-glucuronate = 3-O-{[(1-&gt;4)-beta-D-GlcA-(1-&gt;4)-alpha-D-GlcNAc](n+1)-(1-&gt;4)-beta-D-GlcA-(1-&gt;3)-beta-D-Gal-(1-&gt;3)-beta-D-Gal-(1-&gt;4)-beta-D-Xyl}-L-seryl-[protein] + UDP + H(+). Its pathway is protein modification; protein glycosylation. Functionally, glycosyltransferase forming with EXT2 the heterodimeric heparan sulfate polymerase which catalyzes the elongation of the heparan sulfate glycan backbone. Glycan backbone extension consists in the alternating transfer of (1-&gt;4)-beta-D-GlcA and (1-&gt;4)-alpha-D-GlcNAc residues from their respective UDP-sugar donors. Both EXT1 and EXT2 are required for the full activity of the polymerase since EXT1 bears the N-acetylglucosaminyl-proteoglycan 4-beta-glucuronosyltransferase activity within the complex while EXT2 carries the glucuronosyl-N-acetylglucosaminyl-proteoglycan 4-alpha-N-acetylglucosaminyltransferase activity. Heparan sulfate proteoglycans are ubiquitous components of the extracellular matrix and play an important role in tissue homeostasis and signaling. This Pongo abelii (Sumatran orangutan) protein is Exostosin-1 (EXT1).